The sequence spans 35 residues: Thionin NsW1 (35 aa).

Cystine bridges form between Cys-4–Cys-32, Cys-12–Cys-30, and Cys-16–Cys-26.

In terms of processing, contains 4 disulfide bonds.

Its subcellular location is the secreted. Functionally, antimicrobial peptide disrupting membranes. Has antibacterial against Gram-positive bacteria S.aureus (MIC=6.5 uM) and B.subtilis (MIC=3.25 uM) but not against Gram-negative bacterium E.coli. Has antifungal activity against C.albicans (MIC=1.63 uM). This chain is Thionin NsW1, found in Nigella sativa (Black cumin).